Consider the following 532-residue polypeptide: Eukaryotic translation initiation factor 3 subunit D (532 aa).

The disordered stretch occupies residues 108-161; sequence ATVLKTRGGAPRGGSFAGRGGSQRGGRFQNQPGRGPVGGQRGPNPRFGKSKFGW. The segment covering 117-131 has biased composition (gly residues); sequence APRGGSFAGRGGSQR. A compositionally biased stretch (low complexity) spans 132–141; that stretch reads GGRFQNQPGR. The tract at residues 296–310 is RNA gate; the sequence is PLDFITVDENAADPP.

Belongs to the eIF-3 subunit D family. In terms of assembly, component of the eukaryotic translation initiation factor 3 (eIF-3) complex.

The protein resides in the cytoplasm. Functionally, mRNA cap-binding component of the eukaryotic translation initiation factor 3 (eIF-3) complex, which is involved in protein synthesis of a specialized repertoire of mRNAs and, together with other initiation factors, stimulates binding of mRNA and methionyl-tRNAi to the 40S ribosome. The eIF-3 complex specifically targets and initiates translation of a subset of mRNAs involved in cell proliferation. In the eIF-3 complex, eif3d specifically recognizes and binds the 7-methylguanosine cap of a subset of mRNAs. The protein is Eukaryotic translation initiation factor 3 subunit D of Yarrowia lipolytica (strain CLIB 122 / E 150) (Yeast).